Reading from the N-terminus, the 548-residue chain is MAAKDVKFGNEARIKMLRGVNVLADAVKVTLGPKGRNVVLDKSFGAPSITKDGVSVAREIELEDKFENMGAQMVKEVASKANDAAGDGTTTATLLAQSIVNEGLKAVAAGMNPMDLKRGIDKAVISAVEELKNLSVPCSDSKAITQVGTISANADEKVGALIAEAMEKVGNDGVITVEEGTGLQNELEVVKGMQFDRGYLSPYFINKPETGIVELENPYILVADKKISNVREMLPILESVAKSGKPLLIISEDLEGEALATLVVNSMRGIVKVAAVKAPGFGDRRKAMLQDISILTGGSVISEELAMELEKSTLEDLGQAKRVVISKDTTTIIGGVGEKHTIQSRISQIRQEIQEATSDYDKEKLNERLAKLSGGVAVLKVGAATEVEMKEKKARVEDALHATRAAVEEGVVAGGGVALVRVAGKTSNLRGQNEDQNVGIRVALRAMEAPLRQIVSNSGEEPSVVTNNVKDGKGNYGYNAATDEYGDMIDFGILDPTKVTRSALQYAASVAGLMITTECMVTDLPKEDKSSDSNSSPAGGMGGMGGMM.

ATP is bound by residues 30–33, Lys-51, 87–91, Gly-415, 479–481, and Asp-495; these read TLGP, DGTTT, and NAA. The disordered stretch occupies residues 524–548; it reads LPKEDKSSDSNSSPAGGMGGMGGMM. Residues 539–548 show a composition bias toward gly residues; sequence GGMGGMGGMM.

This sequence belongs to the chaperonin (HSP60) family. As to quaternary structure, forms a cylinder of 14 subunits composed of two heptameric rings stacked back-to-back. Interacts with the co-chaperonin GroES.

The protein resides in the cytoplasm. It carries out the reaction ATP + H2O + a folded polypeptide = ADP + phosphate + an unfolded polypeptide.. In terms of biological role, together with its co-chaperonin GroES, plays an essential role in assisting protein folding. The GroEL-GroES system forms a nano-cage that allows encapsulation of the non-native substrate proteins and provides a physical environment optimized to promote and accelerate protein folding. The sequence is that of Chaperonin GroEL from Buchnera aphidicola subsp. Myzus persicae (Myzus persicae primary endosymbiont).